Reading from the N-terminus, the 297-residue chain is 4-hydroxy-tetrahydrodipicolinate synthase (297 aa).

Residue Thr-51 coordinates pyruvate. Tyr-139 acts as the Proton donor/acceptor in catalysis. Residue Lys-167 is the Schiff-base intermediate with substrate of the active site. A pyruvate-binding site is contributed by Val-209.

This sequence belongs to the DapA family. Homotetramer; dimer of dimers.

The protein resides in the cytoplasm. The catalysed reaction is L-aspartate 4-semialdehyde + pyruvate = (2S,4S)-4-hydroxy-2,3,4,5-tetrahydrodipicolinate + H2O + H(+). The protein operates within amino-acid biosynthesis; L-lysine biosynthesis via DAP pathway; (S)-tetrahydrodipicolinate from L-aspartate: step 3/4. In terms of biological role, catalyzes the condensation of (S)-aspartate-beta-semialdehyde [(S)-ASA] and pyruvate to 4-hydroxy-tetrahydrodipicolinate (HTPA). This Albidiferax ferrireducens (strain ATCC BAA-621 / DSM 15236 / T118) (Rhodoferax ferrireducens) protein is 4-hydroxy-tetrahydrodipicolinate synthase.